Here is a 429-residue protein sequence, read N- to C-terminus: MGKNVVVLGSQWGDEGKGKIVDLLTEKASAVARFQGGHNAGHTLVVDGKKTVLHLIPSGILRDDVTCFIGNGVVLSPEALLIEMKELEDNNVPVRERLKISPNCPLIMPYHIALDQAREAKRGSGKIGTTGRGIGPAYEDKVARRAIKLADLFRPDLEEKLRNLIEYHNFQLTQYYKVDAIDFDTTFALCQQWRDELKELVCDVTEALNQLRLAGKNLMFEGAQGTLLDIDHGTYPFVTSSSVTAGGVSTGTGIGPLYLDYVLGITKAYTTRVGSGPFPTELFDDVGAHLAKVGHEFGATTGRARRCGWFDAEALRRAVVLNSLSGICLTKLDVLDGLDEIRIGVGYDIPESEFAAAHDGEFYETVTPKYETLPGWKGSTVGITNYDDLPEEAKAYIKRIEQLIDCPVDIISTGPDRDETIVLRDPYDA.

GTP contacts are provided by residues 13–19 and 41–43; these read GDEGKGK and GHT. Catalysis depends on D14, which acts as the Proton acceptor. 2 residues coordinate Mg(2+): D14 and G41. Residues 14–17, 39–42, T130, R144, Q224, T239, and R303 each bind IMP; these read DEGK and NAGH. The active-site Proton donor is H42. 299 to 305 is a substrate binding site; it reads ATTGRAR. GTP contacts are provided by residues R305, 331 to 333, and 412 to 414; these read KLD and STG.

It belongs to the adenylosuccinate synthetase family. As to quaternary structure, homodimer. Mg(2+) is required as a cofactor.

The protein localises to the cytoplasm. The enzyme catalyses IMP + L-aspartate + GTP = N(6)-(1,2-dicarboxyethyl)-AMP + GDP + phosphate + 2 H(+). It functions in the pathway purine metabolism; AMP biosynthesis via de novo pathway; AMP from IMP: step 1/2. In terms of biological role, plays an important role in the de novo pathway of purine nucleotide biosynthesis. Catalyzes the first committed step in the biosynthesis of AMP from IMP. The protein is Adenylosuccinate synthetase of Psychrobacter sp. (strain PRwf-1).